The primary structure comprises 245 residues: Ubiquinone biosynthesis O-methyltransferase (245 aa).

S-adenosyl-L-methionine contacts are provided by R44, G64, D85, and M129.

Belongs to the methyltransferase superfamily. UbiG/COQ3 family.

It carries out the reaction a 3-demethylubiquinol + S-adenosyl-L-methionine = a ubiquinol + S-adenosyl-L-homocysteine + H(+). The catalysed reaction is a 3-(all-trans-polyprenyl)benzene-1,2-diol + S-adenosyl-L-methionine = a 2-methoxy-6-(all-trans-polyprenyl)phenol + S-adenosyl-L-homocysteine + H(+). The protein operates within cofactor biosynthesis; ubiquinone biosynthesis. Its function is as follows. O-methyltransferase that catalyzes the 2 O-methylation steps in the ubiquinone biosynthetic pathway. In Proteus mirabilis (strain HI4320), this protein is Ubiquinone biosynthesis O-methyltransferase.